The primary structure comprises 291 residues: Inactive dihydropteroate synthase 2 (291 aa).

Positions 15–272 constitute a Pterin-binding domain; it reads QLIMAIVNRT…EVVATRRVLE (258 aa).

This sequence belongs to the DHPS family. Homodimer.

Functionally, has very low affinity for the DHPS substrate 6-hydroxymethyl-7,8-dihydropterin-pyrophosphate, but can bind the inhibitor dapsone. Seems to lack dihydropteroate synthase activity, and does probably not function in folate metabolism. This chain is Inactive dihydropteroate synthase 2 (folP2), found in Mycobacterium leprae (strain TN).